We begin with the raw amino-acid sequence, 163 residues long: MGNCAKRPRHRAPKDRELRPEEIEELQAAFQEFDRDRDGYIGYQELGACMRTLGYMPTEMELIEISQQISGGKVDFEDFVELMGPKLLAETADMIGVRELRDAFREFDTNGDGCISLGELRAALKALLGERLSQREVDEILRDIDLNGDGLVDFEEFVRMMSR.

A lipid anchor (N-myristoyl glycine) is attached at glycine 2. 4 EF-hand domains span residues 21-56 (EEIEELQAAFQEFDRDRDGYIGYQELGACMRTLGYM), 72-89 (GKVDFEDFVELMGPKLLA), 95-130 (IGVRELRDAFREFDTNGDGCISLGELRAALKALLGE), and 132-163 (LSQREVDEILRDIDLNGDGLVDFEEFVRMMSR). Ca(2+)-binding residues include aspartate 34, aspartate 36, aspartate 38, tyrosine 40, and glutamate 45. The Ca(2+) site is built by aspartate 108, asparagine 110, aspartate 112, cysteine 114, glutamate 119, aspartate 145, asparagine 147, aspartate 149, and glutamate 156.

Its subcellular location is the cytoplasm. It localises to the perinuclear region. It is found in the cell membrane. The protein localises to the golgi apparatus. Its function is as follows. Required for sound encoding at inner hair cells (IHCs) synapses, likely via inhibition of the inactivation of voltage-gated calcium channel of type 1.3 (Cav1.3) in the IHCs. Required for the normal transfer of light signals through the retina. This is Calcium-binding protein 2 (CABP2) from Bos taurus (Bovine).